Consider the following 446-residue polypeptide: Phosphoglucosamine mutase (446 aa).

Ser99 (phosphoserine intermediate) is an active-site residue. Mg(2+)-binding residues include Ser99, Asp242, Asp244, and Asp246. Ser99 carries the phosphoserine modification.

This sequence belongs to the phosphohexose mutase family. Mg(2+) is required as a cofactor. Activated by phosphorylation.

It catalyses the reaction alpha-D-glucosamine 1-phosphate = D-glucosamine 6-phosphate. Its function is as follows. Catalyzes the conversion of glucosamine-6-phosphate to glucosamine-1-phosphate. This is Phosphoglucosamine mutase from Campylobacter concisus (strain 13826).